The following is a 164-amino-acid chain: FMN reductase (NADH) RutF (164 aa).

It belongs to the non-flavoprotein flavin reductase family. RutF subfamily.

It carries out the reaction FMNH2 + NAD(+) = FMN + NADH + 2 H(+). Its function is as follows. Catalyzes the reduction of FMN to FMNH2 which is used to reduce pyrimidine by RutA via the Rut pathway. The sequence is that of FMN reductase (NADH) RutF from Escherichia coli O81 (strain ED1a).